Here is a 570-residue protein sequence, read N- to C-terminus: Sulfite reductase [NADPH] hemoprotein beta-component (570 aa).

The [4Fe-4S] cluster site is built by cysteine 433, cysteine 439, cysteine 478, and cysteine 482. Cysteine 482 lines the siroheme pocket.

It belongs to the nitrite and sulfite reductase 4Fe-4S domain family. Alpha(8)-beta(8). The alpha component is a flavoprotein, the beta component is a hemoprotein. Requires siroheme as cofactor. It depends on [4Fe-4S] cluster as a cofactor.

It catalyses the reaction hydrogen sulfide + 3 NADP(+) + 3 H2O = sulfite + 3 NADPH + 4 H(+). The protein operates within sulfur metabolism; hydrogen sulfide biosynthesis; hydrogen sulfide from sulfite (NADPH route): step 1/1. Functionally, component of the sulfite reductase complex that catalyzes the 6-electron reduction of sulfite to sulfide. This is one of several activities required for the biosynthesis of L-cysteine from sulfate. The chain is Sulfite reductase [NADPH] hemoprotein beta-component from Aeromonas hydrophila subsp. hydrophila (strain ATCC 7966 / DSM 30187 / BCRC 13018 / CCUG 14551 / JCM 1027 / KCTC 2358 / NCIMB 9240 / NCTC 8049).